Here is a 259-residue protein sequence, read N- to C-terminus: Adenosylcobinamide-GDP ribazoletransferase (259 aa).

The next 7 membrane-spanning stretches (helical) occupy residues A41 to F61, F67 to G87, I119 to S139, L148 to L168, A179 to P199, L200 to A220, and T237 to L257.

This sequence belongs to the CobS family. Mg(2+) serves as cofactor.

It localises to the cell inner membrane. It catalyses the reaction alpha-ribazole + adenosylcob(III)inamide-GDP = adenosylcob(III)alamin + GMP + H(+). The enzyme catalyses alpha-ribazole 5'-phosphate + adenosylcob(III)inamide-GDP = adenosylcob(III)alamin 5'-phosphate + GMP + H(+). It functions in the pathway cofactor biosynthesis; adenosylcobalamin biosynthesis; adenosylcobalamin from cob(II)yrinate a,c-diamide: step 7/7. Joins adenosylcobinamide-GDP and alpha-ribazole to generate adenosylcobalamin (Ado-cobalamin). Also synthesizes adenosylcobalamin 5'-phosphate from adenosylcobinamide-GDP and alpha-ribazole 5'-phosphate. This Mesorhizobium japonicum (strain LMG 29417 / CECT 9101 / MAFF 303099) (Mesorhizobium loti (strain MAFF 303099)) protein is Adenosylcobinamide-GDP ribazoletransferase.